A 29-amino-acid polypeptide reads, in one-letter code: DCLPGWSVYEGRCYKVFNQKTWKAAEKFC.

The C-type lectin domain occupies Asp-1–Cys-29. A disulfide bond links Cys-2 and Cys-13.

This sequence belongs to the snaclec family. As to quaternary structure, heterodimer of a metalloproteinase subunit and a regulatory subunit comprising two homologous polypeptides disulfide-linked. Expressed by the venom gland.

Its subcellular location is the secreted. Multactivase, a carinactivase-like calcium-dependent prothrombin activator, activates prothrombin via recognition of the calcium ion bound conformation of its gamma-carboxyglutamic acid (GLA) domain, and the subsequent conversion of prothrombin to active thrombin is catalyzed by the catalytic subunit. This chain is Snaclec multactivase regulatory subunit, found in Echis multisquamatus (Central Asian sand viper).